A 192-amino-acid chain; its full sequence is Pyridoxal 5'-phosphate synthase subunit PdxT (192 aa).

L-glutamine is bound at residue glycine 50–serine 52. Cysteine 82 (nucleophile) is an active-site residue. L-glutamine-binding positions include arginine 109 and isoleucine 136 to arginine 137. Residues histidine 172 and glutamate 174 each act as charge relay system in the active site.

The protein belongs to the glutaminase PdxT/SNO family. In the presence of PdxS, forms a dodecamer of heterodimers. Only shows activity in the heterodimer.

The enzyme catalyses aldehydo-D-ribose 5-phosphate + D-glyceraldehyde 3-phosphate + L-glutamine = pyridoxal 5'-phosphate + L-glutamate + phosphate + 3 H2O + H(+). The catalysed reaction is L-glutamine + H2O = L-glutamate + NH4(+). It functions in the pathway cofactor biosynthesis; pyridoxal 5'-phosphate biosynthesis. Functionally, catalyzes the hydrolysis of glutamine to glutamate and ammonia as part of the biosynthesis of pyridoxal 5'-phosphate. The resulting ammonia molecule is channeled to the active site of PdxS. The chain is Pyridoxal 5'-phosphate synthase subunit PdxT from Haemophilus influenzae (strain PittEE).